Here is a 247-residue protein sequence, read N- to C-terminus: ATP synthase subunit a (247 aa).

6 consecutive transmembrane segments (helical) span residues 24–44 (IAFTTSSAYMLLAVVLIAAMM), 82–102 (FFPLVFSLFMFIFVSNIVGII), 112–132 (IIVTFSLALLVFLTVIIYGFY), 141–161 (LFVPSGIPAVILPLVVIIEII), 181–201 (GHVTLKVFASFVTMLGALGFV), and 206–226 (ALLPLGLTVALTGLELMVAFL).

Belongs to the ATPase A chain family. In terms of assembly, F-type ATPases have 2 components, CF(1) - the catalytic core - and CF(0) - the membrane proton channel. CF(1) has five subunits: alpha(3), beta(3), gamma(1), delta(1), epsilon(1). CF(0) has four main subunits: a, b, b' and c.

Its subcellular location is the cell inner membrane. Key component of the proton channel; it plays a direct role in the translocation of protons across the membrane. The chain is ATP synthase subunit a from Bradyrhizobium sp. (strain ORS 278).